The primary structure comprises 278 residues: Biotin synthase (278 aa).

One can recognise a Radical SAM core domain in the interval 1 to 227; sequence MQIMLCAISN…QSVVMVAGGR (227 aa). [4Fe-4S] cluster contacts are provided by C16, C20, and C23. [2Fe-2S] cluster contacts are provided by C60, C95, and C153.

The protein belongs to the radical SAM superfamily. Biotin synthase family. Homodimer. Requires [4Fe-4S] cluster as cofactor. The cofactor is [2Fe-2S] cluster.

The enzyme catalyses (4R,5S)-dethiobiotin + (sulfur carrier)-SH + 2 reduced [2Fe-2S]-[ferredoxin] + 2 S-adenosyl-L-methionine = (sulfur carrier)-H + biotin + 2 5'-deoxyadenosine + 2 L-methionine + 2 oxidized [2Fe-2S]-[ferredoxin]. It participates in cofactor biosynthesis; biotin biosynthesis; biotin from 7,8-diaminononanoate: step 2/2. Its function is as follows. Catalyzes the conversion of dethiobiotin (DTB) to biotin by the insertion of a sulfur atom into dethiobiotin via a radical-based mechanism. This Campylobacter jejuni subsp. doylei (strain ATCC BAA-1458 / RM4099 / 269.97) protein is Biotin synthase.